Here is a 287-residue protein sequence, read N- to C-terminus: MTNQSLHVNIDKWIAENETSFLPPVCNKLMFFYQLNIMYVGGPNVRKDYHIEEGEELFYQVRGDMVLKVIENGKHKDVHIREGEMFLLPARIPHSPQRQANTVGLVIERRRLSKETDGLRYFVANSTEVLFERWFYCENLGTQLVPIIKEFMDSKENETGKPDPANPIKPAPYPLNTMNVMTPFSFREWVEKQKPVLASGCPVDMFGEQFETETLLFGSGTSANKRRTDGWIWQLEGLSNVFMNGKEYSLTAGDCLLIFGETEYKWQRSQDCVALYVAQDPDRKRPY.

A domain A (catalytic) region spans residues Met1–Asp163. Arg46 provides a ligand contact to O2. Fe cation is bound by residues His50, Glu56, and His94. Glu56 contributes to the substrate binding site. Arg98 and Glu108 together coordinate substrate. The linker stretch occupies residues Pro164–Val180. Residues Met181–Tyr287 are domain B.

Belongs to the 3-HAO family. In terms of assembly, monomer. Fe(2+) is required as a cofactor.

It is found in the cytoplasm. Its subcellular location is the cytosol. It carries out the reaction 3-hydroxyanthranilate + O2 = (2Z,4Z)-2-amino-3-carboxymuconate 6-semialdehyde. It functions in the pathway cofactor biosynthesis; NAD(+) biosynthesis; quinolinate from L-kynurenine: step 3/3. Catalyzes the oxidative ring opening of 3-hydroxyanthranilate to 2-amino-3-carboxymuconate semialdehyde, which spontaneously cyclizes to quinolinate. In Danio rerio (Zebrafish), this protein is 3-hydroxyanthranilate 3,4-dioxygenase (haao).